A 226-amino-acid chain; its full sequence is ATP synthase subunit a (226 aa).

6 helical membrane-spanning segments follow: residues 17–37, 79–99, 105–125, 134–154, 176–196, and 199–219; these read FSYF…AMMA, LVAT…IPGF, SLNL…FEGI, FAHF…IEIV, LFLM…AYVL, and FMAF…LAGA.

Belongs to the ATPase A chain family. F-type ATPases have 2 components, CF(1) - the catalytic core - and CF(0) - the membrane proton channel. CF(1) has five subunits: alpha(3), beta(3), gamma(1), delta(1), epsilon(1). CF(0) has three main subunits: a(1), b(2) and c(9-12). The alpha and beta chains form an alternating ring which encloses part of the gamma chain. CF(1) is attached to CF(0) by a central stalk formed by the gamma and epsilon chains, while a peripheral stalk is formed by the delta and b chains.

Its subcellular location is the cell inner membrane. In terms of biological role, key component of the proton channel; it plays a direct role in the translocation of protons across the membrane. This is ATP synthase subunit a from Campylobacter jejuni subsp. jejuni serotype O:23/36 (strain 81-176).